The primary structure comprises 240 residues: Homeobox protein DLX-4 (240 aa).

Residues 80–120 are disordered; sequence QPLCGPAEHPQELEADSEKPRLSPEPSERRPQAPAKKLRKP. The span at 88-110 shows a compositional bias: basic and acidic residues; that stretch reads HPQELEADSEKPRLSPEPSERRP. A DNA-binding region (homeobox) is located at residues 117 to 176; it reads LRKPRTIYSSLQLQHLNQRFQHTQYLALPERAQLAAQLGLTQTQVKIWFQNKRSKYKKLL.

This sequence belongs to the distal-less homeobox family. In terms of tissue distribution, expressed in leukemia cells and placenta. Also expressed in kidney and fetal liver.

Its subcellular location is the nucleus. Functionally, may play a role in determining the production of hemoglobin S. May act as a repressor. During embryonic development, plays a role in palatogenesis. In Homo sapiens (Human), this protein is Homeobox protein DLX-4 (DLX4).